We begin with the raw amino-acid sequence, 558 residues long: Polypeptide N-acetylgalactosaminyltransferase 16 (558 aa).

Residues 1 to 6 are Cytoplasmic-facing; it reads MRKIRA. The helical; Signal-anchor for type II membrane protein transmembrane segment at 7-26 threads the bilayer; the sequence is NAIAILTVAWILGTFYYLWQ. Topologically, residues 27–558 are lumenal; sequence DNRAHAASSG…AQQWQLLPHT (532 aa). The segment at 33-54 is disordered; sequence ASSGGRGAQRAGRRSEQLREDR. Over residues 45–54 the composition is skewed to basic and acidic residues; that stretch reads RRSEQLREDR. Intrachain disulfides connect Cys-113–Cys-340, Cys-331–Cys-409, Cys-441–Cys-460, Cys-486–Cys-506, and Cys-530–Cys-543. The segment at 122–227 is catalytic subdomain A; that stretch reads LPATSVIITF…TEWLPPMLQR (106 aa). The substrate site is built by Asp-163 and Arg-188. Asp-211 is a binding site for Mn(2+). Residue Ser-212 coordinates substrate. His-213 serves as a coordination point for Mn(2+). Residues 286–348 are catalytic subdomain B; sequence PIRTPVIAGG…PCSRVGHVFR (63 aa). Trp-317 lines the substrate pocket. His-345 contributes to the Mn(2+) binding site. Positions 348, 351, and 353 each coordinate substrate. Residues 428–555 enclose the Ricin B-type lectin domain; that stretch reads KEALPGIIKQ…DAQAQQWQLL (128 aa).

This sequence belongs to the glycosyltransferase 2 family. GalNAc-T subfamily. Mn(2+) is required as a cofactor.

The protein resides in the golgi apparatus membrane. It carries out the reaction L-seryl-[protein] + UDP-N-acetyl-alpha-D-galactosamine = a 3-O-[N-acetyl-alpha-D-galactosaminyl]-L-seryl-[protein] + UDP + H(+). The enzyme catalyses L-threonyl-[protein] + UDP-N-acetyl-alpha-D-galactosamine = a 3-O-[N-acetyl-alpha-D-galactosaminyl]-L-threonyl-[protein] + UDP + H(+). It functions in the pathway protein modification; protein glycosylation. Catalyzes the initial reaction in O-linked oligosaccharide biosynthesis, the transfer of an N-acetyl-D-galactosamine residue to a serine or threonine residue on the protein receptor. In Homo sapiens (Human), this protein is Polypeptide N-acetylgalactosaminyltransferase 16 (GALNT16).